The primary structure comprises 415 residues: Serine hydroxymethyltransferase (415 aa).

Residues Leu-119 and 123–125 contribute to the (6S)-5,6,7,8-tetrahydrofolate site; that span reads GHL. Lys-228 carries the post-translational modification N6-(pyridoxal phosphate)lysine. (6S)-5,6,7,8-tetrahydrofolate is bound at residue 353–355; the sequence is SAF.

Belongs to the SHMT family. As to quaternary structure, homodimer. The cofactor is pyridoxal 5'-phosphate.

It localises to the cytoplasm. It carries out the reaction (6R)-5,10-methylene-5,6,7,8-tetrahydrofolate + glycine + H2O = (6S)-5,6,7,8-tetrahydrofolate + L-serine. The protein operates within one-carbon metabolism; tetrahydrofolate interconversion. It functions in the pathway amino-acid biosynthesis; glycine biosynthesis; glycine from L-serine: step 1/1. Catalyzes the reversible interconversion of serine and glycine with tetrahydrofolate (THF) serving as the one-carbon carrier. Also exhibits THF-independent aldolase activity toward beta-hydroxyamino acids, producing glycine and aldehydes, via a retro-aldol mechanism. The protein is Serine hydroxymethyltransferase of Haloarcula marismortui (strain ATCC 43049 / DSM 3752 / JCM 8966 / VKM B-1809) (Halobacterium marismortui).